The sequence spans 999 residues: Probable beta-galactosidase C (999 aa).

The N-terminal stretch at 1 to 21 (MFFFRFLTTVLLLFNAKLLVA) is a signal peptide. Residue Asn25 is glycosylated (N-linked (GlcNAc...) asparagine). Substrate is bound by residues Tyr80, Asn125, Glu127, and Asn185. Glu186 functions as the Proton donor in the catalytic mechanism. Residue Asn195 is glycosylated (N-linked (GlcNAc...) asparagine). Residue Tyr249 coordinates substrate. Cys255 and Cys302 are joined by a disulfide. Residue Asn274 is glycosylated (N-linked (GlcNAc...) asparagine). Catalysis depends on Glu285, which acts as the Nucleophile. Position 351 (Tyr351) interacts with substrate. N-linked (GlcNAc...) asparagine glycans are attached at residues Asn389, Asn441, Asn512, Asn519, Asn600, Asn675, Asn713, Asn757, Asn808, and Asn897.

The protein belongs to the glycosyl hydrolase 35 family.

Its subcellular location is the secreted. The enzyme catalyses Hydrolysis of terminal non-reducing beta-D-galactose residues in beta-D-galactosides.. Its function is as follows. Cleaves beta-linked terminal galactosyl residues from gangliosides, glycoproteins, and glycosaminoglycans. The polypeptide is Probable beta-galactosidase C (lacC) (Talaromyces marneffei (strain ATCC 18224 / CBS 334.59 / QM 7333) (Penicillium marneffei)).